The chain runs to 616 residues: Replication protein A 70 kDa DNA-binding subunit (616 aa).

Residue Met1 is modified to N-acetylmethionine. Residues Lys22 and Lys88 each participate in a glycyl lysine isopeptide (Lys-Gly) (interchain with G-Cter in ubiquitin) cross-link. The disordered stretch occupies residues 121–154 (GLGQPQVAPPAPAASPAASSRPQPQNGSSGMGST). Over residues 134–145 (ASPAASSRPQPQ) the composition is skewed to low complexity. Lys163 and Lys167 each carry N6-acetyllysine; alternate. Residues Lys163 and Lys167 each participate in a glycyl lysine isopeptide (Lys-Gly) (interchain with G-Cter in ubiquitin); alternate cross-link. Position 180 is a phosphothreonine (Thr180). A Glycyl lysine isopeptide (Lys-Gly) (interchain with G-Cter in ubiquitin) cross-link involves residue Lys183. At Thr191 the chain carries Phosphothreonine. Residues 197-281 (WTICARVTNK…VKNDYEMTFN (85 aa)) constitute a DNA-binding region (OB). Residues Lys220 and Lys244 each participate in a glycyl lysine isopeptide (Lys-Gly) (interchain with G-Cter in ubiquitin) cross-link. Lys259 is modified (N6-acetyllysine; alternate). Lys259 is covalently cross-linked (Glycyl lysine isopeptide (Lys-Gly) (interchain with G-Cter in ubiquitin); alternate). Glycyl lysine isopeptide (Lys-Gly) (interchain with G-Cter in ubiquitin) cross-links involve residues Lys267 and Lys331. Ser384 is subject to Phosphoserine. Glycyl lysine isopeptide (Lys-Gly) (interchain with G-Cter in ubiquitin) cross-links involve residues Lys410 and Lys431. Residue Lys449 forms a Glycyl lysine isopeptide (Lys-Gly) (interchain with G-Cter in SUMO) linkage. A Glycyl lysine isopeptide (Lys-Gly) (interchain with G-Cter in ubiquitin) cross-link involves residue Lys458. The segment at 481-503 (CPTQDCNKKVIDQQNGLYRCEKC) adopts a C4-type zinc-finger fold. Lys553 is covalently cross-linked (Glycyl lysine isopeptide (Lys-Gly) (interchain with G-Cter in ubiquitin)). Lys577 is covalently cross-linked (Glycyl lysine isopeptide (Lys-Gly) (interchain with G-Cter in SUMO)).

This sequence belongs to the replication factor A protein 1 family. In terms of assembly, component of the canonical replication protein A complex (RPA), a heterotrimer composed of RPA1, RPA2 and RPA3. Also a component of the aRPA, the alternative replication protein A complex, a trimeric complex similar to the replication protein A complex/RPA but where RPA1 and RPA3 are associated with RPA4 instead of RPA2. The DNA-binding activity may reside exclusively on the RPA1 subunit. Interacts with PRPF19; the PRP19-CDC5L complex is recruited to the sites of DNA repair where it ubiquitinates the replication protein A complex (RPA). Interacts with RIPK1. Interacts with the polymerase alpha subunit POLA1/p180; this interaction stabilizes the replicative complex and reduces the misincorporation rate of DNA polymerase alpha by acting as a fidelity clamp. Interacts with RAD51 and SENP6 to regulate DNA repair. Interacts with HELB; this interaction promotes HELB recruitment to chromatin following DNA damage. Interacts with PRIMPOL; leading to recruit PRIMPOL on chromatin and stimulate its DNA primase activity. Interacts with XPA; the interaction is direct and associates XPA with the RPA complex. Interacts with ETAA1; the interaction is direct and promotes ETAA1 recruitment at stalled replication forks. Interacts with RPA1; this interaction associates HROB with the RPA complex. Interacts (when poly-ADP-ribosylated) with HTATSF1. Interacts with BRIP1/FANCJ via this RPA1 subunit; following DNA damage they colocalize in foci in the nucleus. In terms of processing, DNA damage-induced 'Lys-63'-linked polyubiquitination by PRPF19 mediates ATRIP recruitment to the RPA complex at sites of DNA damage and activation of ATR. Ubiquitinated by RFWD3 at stalled replication forks in response to DNA damage: ubiquitination by RFWD3 does not lead to degradation by the proteasome and promotes removal of the RPA complex from stalled replication forks, promoting homologous recombination. Post-translationally, sumoylated on lysine residues Lys-449 and Lys-577, with Lys-449 being the major site. Sumoylation promotes recruitment of RAD51 to the DNA damage foci to initiate DNA repair through homologous recombination. Desumoylated by SENP6. Poly-ADP-ribosylated by PARP1; promoting recruitment of HTATSF1.

It localises to the nucleus. It is found in the PML body. Functionally, as part of the heterotrimeric replication protein A complex (RPA/RP-A), binds and stabilizes single-stranded DNA intermediates that form during DNA replication or upon DNA stress. It prevents their reannealing and in parallel, recruits and activates different proteins and complexes involved in DNA metabolism. Thereby, it plays an essential role both in DNA replication and the cellular response to DNA damage. In the cellular response to DNA damage, the RPA complex controls DNA repair and DNA damage checkpoint activation. Through recruitment of ATRIP activates the ATR kinase a master regulator of the DNA damage response. It is required for the recruitment of the DNA double-strand break repair factors RAD51 and RAD52 to chromatin in response to DNA damage. Also recruits to sites of DNA damage proteins like XPA and XPG that are involved in nucleotide excision repair and is required for this mechanism of DNA repair. Also plays a role in base excision repair (BER) probably through interaction with UNG. Also recruits SMARCAL1/HARP, which is involved in replication fork restart, to sites of DNA damage. Plays a role in telomere maintenance. As part of the alternative replication protein A complex, aRPA, binds single-stranded DNA and probably plays a role in DNA repair. Compared to the RPA2-containing, canonical RPA complex, may not support chromosomal DNA replication and cell cycle progression through S-phase. The aRPA may not promote efficient priming by DNA polymerase alpha but could support DNA synthesis by polymerase delta in presence of PCNA and replication factor C (RFC), the dual incision/excision reaction of nucleotide excision repair and RAD51-dependent strand exchange. RPA stimulates 5'-3' helicase activity of the BRIP1/FANCJ. This Homo sapiens (Human) protein is Replication protein A 70 kDa DNA-binding subunit (RPA1).